The chain runs to 326 residues: Acetyl-coenzyme A carboxylase carboxyl transferase subunit beta (326 aa).

The CoA carboxyltransferase N-terminal domain maps to 29–298 (LWIKCEACGT…TLISDESLET (270 aa)). Residues C33, C36, C52, and C55 each coordinate Zn(2+). A C4-type zinc finger spans residues 33–55 (CEACGTLTYTKDLQANQMVCPEC). The disordered stretch occupies residues 302–326 (CHLPFQAESHNLSTTDNKIQPTPQG). Residues 309–326 (ESHNLSTTDNKIQPTPQG) show a composition bias toward polar residues.

Belongs to the AccD/PCCB family. In terms of assembly, acetyl-CoA carboxylase is a heterohexamer composed of biotin carboxyl carrier protein (AccB), biotin carboxylase (AccC) and two subunits each of ACCase subunit alpha (AccA) and ACCase subunit beta (AccD). The cofactor is Zn(2+).

It is found in the cytoplasm. It carries out the reaction N(6)-carboxybiotinyl-L-lysyl-[protein] + acetyl-CoA = N(6)-biotinyl-L-lysyl-[protein] + malonyl-CoA. Its pathway is lipid metabolism; malonyl-CoA biosynthesis; malonyl-CoA from acetyl-CoA: step 1/1. In terms of biological role, component of the acetyl coenzyme A carboxylase (ACC) complex. Biotin carboxylase (BC) catalyzes the carboxylation of biotin on its carrier protein (BCCP) and then the CO(2) group is transferred by the transcarboxylase to acetyl-CoA to form malonyl-CoA. The polypeptide is Acetyl-coenzyme A carboxylase carboxyl transferase subunit beta (Trichodesmium erythraeum (strain IMS101)).